Here is a 180-residue protein sequence, read N- to C-terminus: MANSLVEKYSNEIAPAMNKKFNYDSVMEIPKIDKIVLNMGVGDAVSNAKNLDEAVEELTLISGQKPLITKAKKSIANFRLREGMSIGAKVTLRGDRMYDFLYKLINVSLPRVRDFRGISSRSFDGRGNYTLGIKEQLIFPEIDYDKVNRVRGLDVVIVTTAKTDEEARELLTEFGMPFAK.

This sequence belongs to the universal ribosomal protein uL5 family. In terms of assembly, part of the 50S ribosomal subunit; part of the 5S rRNA/L5/L18/L25 subcomplex. Contacts the 5S rRNA and the P site tRNA. Forms a bridge to the 30S subunit in the 70S ribosome.

Its function is as follows. This is one of the proteins that bind and probably mediate the attachment of the 5S RNA into the large ribosomal subunit, where it forms part of the central protuberance. In the 70S ribosome it contacts protein S13 of the 30S subunit (bridge B1b), connecting the 2 subunits; this bridge is implicated in subunit movement. Contacts the P site tRNA; the 5S rRNA and some of its associated proteins might help stabilize positioning of ribosome-bound tRNAs. This is Large ribosomal subunit protein uL5 from Lactobacillus johnsonii (strain CNCM I-12250 / La1 / NCC 533).